We begin with the raw amino-acid sequence, 218 residues long: Heart- and neural crest derivatives-expressed protein 1 (218 aa).

3 disordered regions span residues 1–23, 56–112, and 172–203; these read MNLVGSYAHHHHHHHHHHPHPAH, APDF…RTES, and ADGGRESKRKRELQQHEGFPPALGPGEKRIKG. Positions 8–21 are enriched in basic residues; the sequence is AHHHHHHHHHHPHP. The segment covering 68 to 92 has biased composition (low complexity); sequence AAAAAASYGPDARPGQSPGRLEALG. Residues 95–107 show a composition bias toward basic residues; that stretch reads LGRRKGSGPKKER. The region spanning 97-149 is the bHLH domain; the sequence is RRKGSGPKKERRRTESINSAFAELRECIPNVPADTKLSKIKTLRLATSYIAYL. Threonine 110 is subject to Phosphothreonine; by PLK4. Serine 112 is subject to Phosphoserine; by PLK4.

Efficient DNA binding requires dimerization with another bHLH protein. Forms homodimers and heterodimers with TCF3 gene products E12 and E47, HAND2 and HEY1, HEY2 and HEYL (hairy-related transcription factors). Interacts with MDFIC. Interacts with SOX15; the interaction enhances HAND1-induced differentiation of trophoblast giant cells. In terms of processing, phosphorylation by PLK4 disrupts the interaction with MDFIC and leads to translocation into the nucleoplasm, allowing dimerization and transcription factor activity.

The protein localises to the nucleus. It localises to the nucleoplasm. The protein resides in the nucleolus. Functionally, transcription factor that plays an essential role in both trophoblast giant cell differentiation and in cardiac morphogenesis. Binds the DNA sequence 5'-NRTCTG-3' (non-canonical E-box). Acts as a transcriptional repressor of SOX15. In the adult, could be required for ongoing expression of cardiac-specific genes. In Bos taurus (Bovine), this protein is Heart- and neural crest derivatives-expressed protein 1 (HAND1).